Reading from the N-terminus, the 417-residue chain is UDP-N-acetylglucosamine 1-carboxyvinyltransferase (417 aa).

Residue Lys-22–Asn-23 participates in phosphoenolpyruvate binding. Position 92 (Arg-92) interacts with UDP-N-acetyl-alpha-D-glucosamine. Cys-116 functions as the Proton donor in the catalytic mechanism. Position 116 is a 2-(S-cysteinyl)pyruvic acid O-phosphothioketal (Cys-116). Residues Arg-121–Leu-125, Asp-306, and Ile-328 contribute to the UDP-N-acetyl-alpha-D-glucosamine site.

It belongs to the EPSP synthase family. MurA subfamily.

The protein resides in the cytoplasm. It catalyses the reaction phosphoenolpyruvate + UDP-N-acetyl-alpha-D-glucosamine = UDP-N-acetyl-3-O-(1-carboxyvinyl)-alpha-D-glucosamine + phosphate. The protein operates within cell wall biogenesis; peptidoglycan biosynthesis. Cell wall formation. Adds enolpyruvyl to UDP-N-acetylglucosamine. The polypeptide is UDP-N-acetylglucosamine 1-carboxyvinyltransferase (Buchnera aphidicola subsp. Schizaphis graminum (strain Sg)).